The following is a 498-amino-acid chain: Lysine--tRNA ligase (498 aa).

Residues E411 and E418 each coordinate Mg(2+).

The protein belongs to the class-II aminoacyl-tRNA synthetase family. As to quaternary structure, homodimer. Mg(2+) is required as a cofactor.

It localises to the cytoplasm. The enzyme catalyses tRNA(Lys) + L-lysine + ATP = L-lysyl-tRNA(Lys) + AMP + diphosphate. The chain is Lysine--tRNA ligase from Enterococcus faecalis (strain ATCC 700802 / V583).